The sequence spans 137 residues: Small heat shock protein IbpA (137 aa).

The region spanning 28–137 (TQSNGGYPPY…AMKPRRIEIK (110 aa)) is the sHSP domain.

It belongs to the small heat shock protein (HSP20) family. As to quaternary structure, monomer. Forms homomultimers of about 100-150 subunits at optimal growth temperatures. Conformation changes to monomers at high temperatures or high ionic concentrations.

It localises to the cytoplasm. Associates with aggregated proteins, together with IbpB, to stabilize and protect them from irreversible denaturation and extensive proteolysis during heat shock and oxidative stress. Aggregated proteins bound to the IbpAB complex are more efficiently refolded and reactivated by the ATP-dependent chaperone systems ClpB and DnaK/DnaJ/GrpE. Its activity is ATP-independent. In Pectobacterium atrosepticum (strain SCRI 1043 / ATCC BAA-672) (Erwinia carotovora subsp. atroseptica), this protein is Small heat shock protein IbpA.